The chain runs to 209 residues: Superoxide dismutase [Mn/Fe] (209 aa).

His38, His90, Asp172, and His176 together coordinate Fe(3+). His38, His90, Asp172, and His176 together coordinate Mn(2+).

It belongs to the iron/manganese superoxide dismutase family. Mn(2+) serves as cofactor. Fe(3+) is required as a cofactor.

It carries out the reaction 2 superoxide + 2 H(+) = H2O2 + O2. Its function is as follows. Destroys superoxide anion radicals which are normally produced within the cells and which are toxic to biological systems. Catalyzes the dismutation of superoxide anion radicals into O2 and H2O2 by successive reduction and oxidation of the transition metal ion at the active site. This chain is Superoxide dismutase [Mn/Fe] (sodB), found in Rickettsia typhi (strain ATCC VR-144 / Wilmington).